Consider the following 133-residue polypeptide: Small ribosomal subunit protein eS8 (133 aa).

A disordered region spans residues 1–34; that stretch reads MGVWHGRSLRKPTGGRIRPHRKKRKFEMGNPPTE.

Belongs to the eukaryotic ribosomal protein eS8 family. As to quaternary structure, part of the 30S ribosomal subunit.

The polypeptide is Small ribosomal subunit protein eS8 (Methanopyrus kandleri (strain AV19 / DSM 6324 / JCM 9639 / NBRC 100938)).